Consider the following 129-residue polypeptide: UPF0102 protein CPS_4433 (129 aa).

This sequence belongs to the UPF0102 family.

This Colwellia psychrerythraea (strain 34H / ATCC BAA-681) (Vibrio psychroerythus) protein is UPF0102 protein CPS_4433.